Consider the following 112-residue polypeptide: NADH-quinone oxidoreductase subunit K (112 aa).

The next 3 helical transmembrane spans lie at 14-34 (LEGY…GALI), 39-59 (VVVF…LVAF), and 76-96 (LIIA…LAIF).

It belongs to the complex I subunit 4L family. In terms of assembly, NDH-1 is composed of 14 different subunits. Subunits NuoA, H, J, K, L, M, N constitute the membrane sector of the complex.

The protein localises to the cell membrane. It catalyses the reaction a quinone + NADH + 5 H(+)(in) = a quinol + NAD(+) + 4 H(+)(out). Functionally, NDH-1 shuttles electrons from NADH, via FMN and iron-sulfur (Fe-S) centers, to quinones in the respiratory chain. The immediate electron acceptor for the enzyme in this species is believed to be a menaquinone. Couples the redox reaction to proton translocation (for every two electrons transferred, four hydrogen ions are translocated across the cytoplasmic membrane), and thus conserves the redox energy in a proton gradient. This is NADH-quinone oxidoreductase subunit K from Rubrobacter xylanophilus (strain DSM 9941 / JCM 11954 / NBRC 16129 / PRD-1).